The sequence spans 559 residues: MAETDGSIPLIPVRMLNEHVYCPRLAYLMWVQGEFSHNEFTVDGVIRHRRVDAGGGVLPSETQEDSRIHARSVSLSSERLGITAKIDLVEGEGAYVSPVDYKRGKRPHVAGGAYEPERVQLCAQGLLLREHGFASDGGALYFVASRERVPVAFDDELIGRTLAAIDEMGRTALSGTMPPPLEDSPKCPRCSLVGICLPDEVRFLSHLSVEPRPIIPADGRGLPLYVQSPKAYVRKDGDCLVIEEERVRVAEARLGETSQVALFGNATLTTAALHECLRREIPVTWLSYGGWFMGHTVSTGHRNVETRTYQYQRSFDPETCLNLARRWIVAKIANCRTLLRRNWRGEGDEAKAPPGLLMSLQDDMRHAMRAPSLEVLLGIEGASAGRYFQHFSRMLRGGDGEGMGFDFTTRNRRPPKDPVNALLSFAYAMLTREWTVALAAVGLDPYRGFYHQPRFGRPALALDMMEPFRPLIADSTVLMAINNGEIRTGDFVRSAGGCNLTDSARKRFIAGFERRMEQEVTHPIFKYTISYRRLLEVQARLLTRYLSGEIPAYPNFVTR.

The interval 1-198 is CRISPR-associated exonuclease Cas4; the sequence is MAETDGSIPL…RCSLVGICLP (198 aa). Cys-22 contributes to the [4Fe-4S] cluster binding site. Residues Asp-87 and Asp-100 each contribute to the Mn(2+) site. Residues Cys-187, Cys-190, and Cys-196 each coordinate [4Fe-4S] cluster. Positions 224–559 are CRISPR-associated endonuclease Cas1; the sequence is LYVQSPKAYV…IPAYPNFVTR (336 aa). Glu-380, His-451, and Glu-466 together coordinate Mn(2+).

The protein in the N-terminal section; belongs to the CRISPR-associated exonuclease Cas4 family. This sequence in the C-terminal section; belongs to the CRISPR-associated endonuclease Cas1 family. In terms of assembly, homodimer, forms a heterotetramer with a Cas2 homodimer. [4Fe-4S] cluster is required as a cofactor. The cofactor is Mg(2+). Mn(2+) serves as cofactor.

It catalyses the reaction exonucleolytic cleavage in the 5'- to 3'-direction to yield nucleoside 3'-phosphates.. Its function is as follows. CRISPR (clustered regularly interspaced short palindromic repeat), is an adaptive immune system that provides protection against mobile genetic elements (viruses, transposable elements and conjugative plasmids). CRISPR clusters contain spacers, sequences complementary to antecedent mobile elements, and target invading nucleic acids. CRISPR clusters are transcribed and processed into CRISPR RNA (crRNA). The Cas4 region acts as a ssDNA exonuclease, while the Cas1 region acts as a dsDNA endonuclease. Involved in the integration of spacer DNA into the CRISPR cassette. This is CRISPR-associated exonuclease Cas4/endonuclease Cas1 fusion (cas4-cas1) from Geobacter sulfurreducens (strain ATCC 51573 / DSM 12127 / PCA).